A 769-amino-acid chain; its full sequence is Serine/threonine-protein kinase PLK4 (769 aa).

Positions 10-263 (YEVYEILGKG…LDQVLQHPFM (254 aa)) constitute a Protein kinase domain. ATP is bound by residues 16-24 (LGKGGFASV) and lysine 39. Aspartate 134 acts as the Proton acceptor in catalysis. Disordered stretches follow at residues 280-304 (SSDSGLVTMSSNGGSNRSNIPSSYG), 337-380 (PQQR…LDIP), and 592-651 (APLT…VLSS). The span at 337 to 371 (PQQRPQSASHNKPTSDFFSGISNDPRTMAPSSPTK) shows a compositional bias: polar residues. Positions 374–491 (KKRLDIPPLN…ARFVQMVKAK (118 aa)) constitute a Cryptic POLO box 1 (CPB1) domain. The Cryptic POLO box 2 (CPB2) domain maps to 492–595 (TPKITYYSEK…GRRPANAPLT (104 aa)). Polar residues predominate over residues 605–648 (TKENQLYSNISSPNTPQTPHQMPSFAMSTASHTSAGNPLTQRPV). The POLO box domain occupies 662-745 (AMKKCTIAGV…MPAILRELNA (84 aa)).

The protein belongs to the protein kinase superfamily. Ser/Thr protein kinase family. CDC5/Polo subfamily. Homodimer. In terms of processing, ubiquitinated; leading to its degradation by the proteasome.

The protein localises to the cytoplasm. It is found in the cytoskeleton. It localises to the microtubule organizing center. The protein resides in the centrosome. Its subcellular location is the centriole. The catalysed reaction is L-seryl-[protein] + ATP = O-phospho-L-seryl-[protein] + ADP + H(+). It catalyses the reaction L-threonyl-[protein] + ATP = O-phospho-L-threonyl-[protein] + ADP + H(+). Serine/threonine-protein kinase that plays a central role in centriole duplication. Able to trigger procentriole formation on the surface of the mother centriole cylinder, leading to the recruitment of centriole biogenesis proteins. When overexpressed, it is able to induce centrosome amplification through the simultaneous generation of multiple procentrioles adjoining each parental centriole during S phase. This Aedes aegypti (Yellowfever mosquito) protein is Serine/threonine-protein kinase PLK4 (SAK).